The chain runs to 209 residues: Small ribosomal subunit protein uS4 (209 aa).

An S4 RNA-binding domain is found at 98–164; the sequence is RRLDNVVYRL…LPVKNAIELN (67 aa).

Belongs to the universal ribosomal protein uS4 family. Part of the 30S ribosomal subunit. Contacts protein S5. The interaction surface between S4 and S5 is involved in control of translational fidelity.

In terms of biological role, one of the primary rRNA binding proteins, it binds directly to 16S rRNA where it nucleates assembly of the body of the 30S subunit. With S5 and S12 plays an important role in translational accuracy. In Thermosipho africanus (strain TCF52B), this protein is Small ribosomal subunit protein uS4.